The sequence spans 1340 residues: Pleckstrin homology domain-containing family G member 2 (1340 aa).

The span at 34–44 (TPTAQAATTMA) shows a compositional bias: polar residues. The disordered stretch occupies residues 34–76 (TPTAQAATTMASPRGSGSSTSLSTVGSEGDPSPACSASRPEPL). The span at 45-62 (SPRGSGSSTSLSTVGSEG) shows a compositional bias: low complexity. The region spanning 98–279 (RLERVAREIV…TAVAWYINDM (182 aa)) is the DH domain. Residues 309–407 (ELVLEGTFRG…WIHCLQRLFF (99 aa)) form the PH domain. Disordered regions lie at residues 431–623 (PKSK…IPCI), 684–743 (LPGP…SVQG), 820–855 (MQRAETRASTNAPRRRPRVLAQPQPSPCPPQEEAEP), 907–979 (NVSD…PSAG), 991–1028 (TTSLPGQECQADTVALSKQEGHEDSQNPNKAPGAEQRD), 1047–1069 (PVCTSSPDQQIPATTPLPLSTDF), and 1125–1146 (PLSSHKQEDAPECLGPEPSLTD). T441 bears the Phosphothreonine mark. S446 and S465 each carry phosphoserine. Residues 560–572 (DIPKFPRDSRVPV) show a composition bias toward basic and acidic residues. Positions 588–600 (SEEEEEEDLETDE) are enriched in acidic residues. 5 stretches are compositionally biased toward polar residues: residues 703–714 (SGSNPGRLSESP), 820–831 (MQRAETRASTNA), 907–921 (NVSDLSKQGHLSSNS), 930–945 (GQSNFQNIQVPSTSLL), and 956–972 (PTASTLPDTSQLQSQVP). Over residues 1049 to 1059 (CTSSPDQQIPA) the composition is skewed to polar residues. The residue at position 1215 (T1215) is a Phosphothreonine. Residues S1219 and S1269 each carry the phosphoserine modification. Residues 1250–1340 (RRQGPGGEGT…VGPSQGPGGS (91 aa)) are disordered. The span at 1276–1288 (PSPPPQPQPPAPP) shows a compositional bias: pro residues. Residues 1319-1333 (HPALLAAPHPGAVGP) show a composition bias toward low complexity.

In terms of tissue distribution, expressed in thymus, skeletal muscle, lung, testis, uterus, pancreas and heart and also expressed during embryogenesis.

Functionally, may be a transforming oncogene with exchange activity for CDC42. May be a guanine-nucleotide exchange factor (GEF) for RAC1 and CDC42. Activated by the binding to subunits beta and gamma of the heterotrimeric guanine nucleotide-binding protein (G protein). Involved in the regulation of actin polymerization. The chain is Pleckstrin homology domain-containing family G member 2 (Plekhg2) from Mus musculus (Mouse).